A 446-amino-acid polypeptide reads, in one-letter code: Phosphoglucosamine mutase (446 aa).

Catalysis depends on S103, which acts as the Phosphoserine intermediate. S103, D242, D244, and D246 together coordinate Mg(2+). S103 carries the post-translational modification Phosphoserine.

It belongs to the phosphohexose mutase family. Requires Mg(2+) as cofactor. In terms of processing, activated by phosphorylation.

The catalysed reaction is alpha-D-glucosamine 1-phosphate = D-glucosamine 6-phosphate. Functionally, catalyzes the conversion of glucosamine-6-phosphate to glucosamine-1-phosphate. This Vibrio campbellii (strain ATCC BAA-1116) protein is Phosphoglucosamine mutase.